A 193-amino-acid polypeptide reads, in one-letter code: dCTP deaminase (193 aa).

DCTP is bound by residues 110 to 115 (RSSLAR), Asp-128, 136 to 138 (VLE), Tyr-171, Lys-178, and Gln-182. The active-site Proton donor/acceptor is Glu-138. The disordered stretch occupies residues 168-193 (DRPYNRRQDAKYKNQQGAVSSRIDED). Residues 170–179 (PYNRRQDAKY) show a composition bias toward basic and acidic residues.

The protein belongs to the dCTP deaminase family. Homotrimer.

The catalysed reaction is dCTP + H2O + H(+) = dUTP + NH4(+). The protein operates within pyrimidine metabolism; dUMP biosynthesis; dUMP from dCTP (dUTP route): step 1/2. Its function is as follows. Catalyzes the deamination of dCTP to dUTP. The polypeptide is dCTP deaminase (Photorhabdus laumondii subsp. laumondii (strain DSM 15139 / CIP 105565 / TT01) (Photorhabdus luminescens subsp. laumondii)).